Reading from the N-terminus, the 97-residue chain is Secreted Ly-6/uPAR domain-containing protein 2 (97 aa).

The signal sequence occupies residues 1 to 22 (MQFHTGLLLAAVLSLQLAAAQA). The UPAR/Ly6 domain maps to 23–95 (LWCHQCTGFG…IACCQTSLCN (73 aa)). 5 disulfide bridges follow: C25-C47, C28-C34, C40-C68, C72-C88, and C89-C94.

In terms of assembly, interacts with CHRNA3, CHRNA4, CHRNA5, CHRNA7, CHRNB2 and CHRNB4. Interacts with CHRM1 and CHRM3 probably in an allosteric manner.

The protein resides in the secreted. In terms of biological role, binds and may modulate the functional properties of nicotinic and muscarinic acetylcholine receptors. May regulate keratinocytes proliferation, differentiation and apoptosis. In vitro moderately inhibits ACh-evoked currents of alpha-3:beta-2-containing nAChRs, strongly these of alpha-4:beta-2-containing nAChRs, modulates alpha-7-containing nAChRs, and inhibits nicotine-induced signaling probably implicating alpha-3:beta-4-containing nAChRs. Proposed to act on alpha-3:beta-2 and alpha-7 nAChRs in an orthosteric, and on mAChRs, such as CHRM1 and CHRM3, in an allosteric manner. This is Secreted Ly-6/uPAR domain-containing protein 2 from Macaca mulatta (Rhesus macaque).